The chain runs to 156 residues: Small ribosomal subunit protein uS7 (156 aa).

Belongs to the universal ribosomal protein uS7 family. As to quaternary structure, part of the 30S ribosomal subunit. Contacts proteins S9 and S11.

In terms of biological role, one of the primary rRNA binding proteins, it binds directly to 16S rRNA where it nucleates assembly of the head domain of the 30S subunit. Is located at the subunit interface close to the decoding center, probably blocks exit of the E-site tRNA. This is Small ribosomal subunit protein uS7 from Teredinibacter turnerae (strain ATCC 39867 / T7901).